The sequence spans 477 residues: Zinc finger C3HC-type protein 1-like (477 aa).

Residues 95–149 (CAKYGWCNIECDMLKCSSCNAYLCASLQPILDFSKYKQRCVELQEALRKAHEKFC) form a C3HC-type zinc finger. Residues 287–392 (SLSAPGTPVS…SSSSDTSPRS (106 aa)) form a disordered region. Polar residues predominate over residues 354–363 (SMGQGENTGL). Residues 370 to 379 (SPHRRAKRPR) show a composition bias toward basic residues. Low complexity predominate over residues 382-392 (SSSSSDTSPRS).

Post-translationally, phosphorylated. May also be weakly phosphorylated on Tyr residues.

The protein localises to the nucleus. Its subcellular location is the nucleus envelope. Its function is as follows. Required for proper positioning of a substantial amount of TPR at the nuclear basket (NB) through interaction with TPR. The polypeptide is Zinc finger C3HC-type protein 1-like (zc3hc1) (Xenopus laevis (African clawed frog)).